A 316-amino-acid polypeptide reads, in one-letter code: 4-diphosphocytidyl-2-C-methyl-D-erythritol kinase (316 aa).

The active site involves Lys-11. 99-109 contacts ATP; the sequence is PVAAGLAGGST. Asp-141 is a catalytic residue.

Belongs to the GHMP kinase family. IspE subfamily.

It catalyses the reaction 4-CDP-2-C-methyl-D-erythritol + ATP = 4-CDP-2-C-methyl-D-erythritol 2-phosphate + ADP + H(+). It participates in isoprenoid biosynthesis; isopentenyl diphosphate biosynthesis via DXP pathway; isopentenyl diphosphate from 1-deoxy-D-xylulose 5-phosphate: step 3/6. Its function is as follows. Catalyzes the phosphorylation of the position 2 hydroxy group of 4-diphosphocytidyl-2C-methyl-D-erythritol. The polypeptide is 4-diphosphocytidyl-2-C-methyl-D-erythritol kinase (Gloeothece citriformis (strain PCC 7424) (Cyanothece sp. (strain PCC 7424))).